A 1627-amino-acid polypeptide reads, in one-letter code: Type III effector DspE (1627 aa).

2 stretches are compositionally biased toward polar residues: residues 22–44 (AKTS…SLIQ) and 59–74 (GNGS…STTL). Disordered stretches follow at residues 22-102 (AKTS…GPIQ) and 436-464 (QTQA…TPGW). Short sequence motifs (wxxxE) lie at residues 464 to 468 (WNLSD), 514 to 520 (WEASSVE), and 660 to 667 (WQNAANHD).

The protein belongs to the AvrE family.

It is found in the secreted. The protein resides in the host cell. Major virulence factor that may function as a water- and solute-permeable channel dedicated to creating osmotic/water potential perturbation and a water- and nutrient-rich apoplast in which bacteria multiply within the infected plant tissues. In terms of biological role, required for plant cell death in N.benthamiana leaves and leaf cell death in S.tuberosum. Essential for pathogenicity. Does not suppress callose formation. This is Type III effector DspE from Pectobacterium carotovorum (Erwinia carotovora).